Here is a 155-residue protein sequence, read N- to C-terminus: Small ribosomal subunit protein uS7cz/uS7cy (155 aa).

This sequence belongs to the universal ribosomal protein uS7 family. Part of the 30S ribosomal subunit.

It is found in the plastid. Functionally, one of the primary rRNA binding proteins, it binds directly to 16S rRNA where it nucleates assembly of the head domain of the 30S subunit. This chain is Small ribosomal subunit protein uS7cz/uS7cy (rps7-A), found in Cuscuta obtusiflora (Peruvian dodder).